The chain runs to 653 residues: Laccase ustL (653 aa).

Residues 1–20 (MTSLTGLALLLCVLASQSWA) form the signal peptide. Plastocyanin-like domains are found at residues 31–143 (WEKG…RPKR) and 173–362 (VLSD…ATQV). Asparagine 74, asparagine 220, asparagine 235, asparagine 255, asparagine 277, asparagine 405, asparagine 463, and asparagine 479 each carry an N-linked (GlcNAc...) asparagine glycan. The Plastocyanin-like 3 domain maps to 463–594 (NQTVGTEDEK…GGMSIALLDG (132 aa)). Residues histidine 501, histidine 504, histidine 506, histidine 576, cysteine 577, histidine 578, and histidine 582 each contribute to the Cu cation site. Asparagine 623 carries N-linked (GlcNAc...) asparagine glycosylation.

Belongs to the multicopper oxidase family.

It carries out the reaction 4 norrubrofusarin + O2 = 2 ustilaginoidin A + 2 H2O. It participates in secondary metabolite biosynthesis. In terms of biological role, laccase; part of the gene cluster that mediates the biosynthesis of ustilaginoidins, dimeric gamma-naphthopyrones isolated from different fungal species. The first step in the biosynthesis of ustilaginoidins is the production of gamma-naphthopyrone precursor YWA1 by the non-reducing polyketide synthase ustP, via condensation of one acetyl-CoA starter unit with 6 malonyl-CoA units. YWA1 is then probably substrate of the ustZ to yield norrubrofusarin via a dehydration reaction. A key enzyme in the biosynthetic pathway is the laccase ustL, which catalyzes the oxidative dimerization of norrubrofusarin to ustilaginoidin A. It can produce the M- and P-atropisomers in varying amounts, depending on the reaction conditions. For the biosynthesis of 3-methylustilaginoid in derivatives such as chaetochromin A, a methylated derivative of YWA1 is required. The C-methylation is considered to be catalyzed by ustM, the phosphopantetheine attachment site of which indicates that it acts on the growing polyketide chain before release of the product. For the biosynthesis of chaetochromin A, it is assumed that saturation of the D2 double bond takes place before dimerization, and is probably catalyzed by an external reductase because no candidate gene was identified within the cluster. The sequence is that of Laccase ustL from Ustilaginoidea virens (Rice false smut fungus).